The sequence spans 276 residues: Integrin-binding sialoprotein (276 aa).

The first 16 residues, 1 to 16 (MRSALLLACLLATASA), serve as a signal peptide directing secretion. The disordered stretch occupies residues 54 to 251 (HRYKGSDSSE…EEPARGDSYR (198 aa)). Over residues 61–75 (SSEEEGDGSEEEEEG) the composition is skewed to acidic residues. A compositionally biased stretch (basic and acidic residues) spans 106–119 (QDCKGGQKGTRGDS). The Cell attachment site motif lies at 116–118 (RGD). Over residues 120–144 (GDEDSDEEEEEEEEEEEEEEVEEQD) the composition is skewed to acidic residues. Polar residues predominate over residues 145–165 (VSVNGTSTNTTAETPHGNNTV). N148, N153, and N162 each carry an N-linked (GlcNAc...) asparagine glycan. Residues 167-188 (AEEEEDDDEEEEEEEEEEEEAE) show a composition bias toward acidic residues. The span at 189–200 (ATTAAATTAQDE) shows a compositional bias: low complexity. A Cell attachment site motif is present at residues 228–230 (RGD). An Integrin-binding motif motif is present at residues 246-248 (RGD). Sulfotyrosine is present on residues Y272 and Y273.

In terms of assembly, monomer. Interacts with integrins; the interaction promotes cell adhesion. Post-translationally, phosphorylated on serine and threonine residues.

It is found in the secreted. Binds tightly to hydroxyapatite. Appears to form an integral part of the mineralized matrix. Probably important to cell-matrix interaction. Promotes adhesion and migration of various cells via the alpha-V/beta-3 integrin receptor (ITGAV:ITGB3). In Gallus gallus (Chicken), this protein is Integrin-binding sialoprotein (IBSP).